A 389-amino-acid chain; its full sequence is DNA replication and repair protein RecF (389 aa).

Residue 30-37 (GPNGFGKT) coordinates ATP.

It belongs to the RecF family.

The protein resides in the cytoplasm. Functionally, the RecF protein is involved in DNA metabolism; it is required for DNA replication and normal SOS inducibility. RecF binds preferentially to single-stranded, linear DNA. It also seems to bind ATP. The polypeptide is DNA replication and repair protein RecF (Mycolicibacterium gilvum (strain PYR-GCK) (Mycobacterium gilvum (strain PYR-GCK))).